We begin with the raw amino-acid sequence, 239 residues long: uncharacterized protein (239 aa).

The next 4 membrane-spanning stretches (helical) occupy residues 9 to 29 (LAIYPIAYVLWGGLMWYSQII), 65 to 85 (IIYLYGFSSMIIGGIAYYLFI), 94 to 114 (IILIDLALGWLFAGLIYTFVV), and 167 to 187 (IYFALAILIPISTLIMGMHWI).

It localises to the cell membrane. This is an uncharacterized protein from Methanocaldococcus jannaschii (strain ATCC 43067 / DSM 2661 / JAL-1 / JCM 10045 / NBRC 100440) (Methanococcus jannaschii).